The chain runs to 657 residues: Iron-sulfur cluster biogenesis chaperone, mitochondrial (657 aa).

Belongs to the heat shock protein 70 family. As to quaternary structure, interacts with the Fe/S cluster assembly proteins ISU1, MGE1, GRX5 and JAC1.

Its subcellular location is the mitochondrion matrix. The catalysed reaction is ATP + H2O = ADP + phosphate + H(+). Functionally, required for the assembly of iron-sulfur (Fe/S) clusters in mitochondria. Assisted by the DnaJ-like co-chaperone JAC1 and the nucleotide exchange factor MGE1, it mediates ATP-dependent Fe-S cluster transfer from the scaffold proteins ISU1/ISU2 to GRX5. The chain is Iron-sulfur cluster biogenesis chaperone, mitochondrial from Saccharomyces cerevisiae (strain ATCC 204508 / S288c) (Baker's yeast).